A 156-amino-acid polypeptide reads, in one-letter code: Small ribosomal subunit protein uS7 (156 aa).

It belongs to the universal ribosomal protein uS7 family. As to quaternary structure, part of the 30S ribosomal subunit. Contacts proteins S9 and S11.

Functionally, one of the primary rRNA binding proteins, it binds directly to 16S rRNA where it nucleates assembly of the head domain of the 30S subunit. Is located at the subunit interface close to the decoding center, probably blocks exit of the E-site tRNA. The chain is Small ribosomal subunit protein uS7 from Levilactobacillus brevis (strain ATCC 367 / BCRC 12310 / CIP 105137 / JCM 1170 / LMG 11437 / NCIMB 947 / NCTC 947) (Lactobacillus brevis).